A 344-amino-acid polypeptide reads, in one-letter code: Polycomb group RING finger protein 2 (344 aa).

An RING-type zinc finger spans residues 18–57; that stretch reads CALCGGYFIDATTIVECLHSFCKTCIVRYLETNKYCPMCD. Glycyl lysine isopeptide (Lys-Gly) (interchain with G-Cter in SUMO2) cross-links involve residues Lys-51 and Lys-88. Residues 81-95 carry the Nuclear localization signal motif; sequence KLVPGLFKDEMKRRR. Polar residues predominate over residues 240-253; that stretch reads TVPTPSEGTNTSGA. Positions 240–344 are disordered; sequence TVPTPSEGTN…VNGAPVPPLT (105 aa). The span at 263–313 shows a compositional bias: low complexity; the sequence is APSPATLPATSSSLPSPATPSHGSPSSHGPPATHPTSPTPPSTASGATTAA. Positions 314–328 are enriched in polar residues; it reads NGGSLNCLQTPSSTS. Thr-344 is modified (phosphothreonine).

In terms of assembly, exists as both a monomer and homodimer. Component of a PRC1-like complex. Interacts with CBX8, RING1 and RNF2. Interacts with CBX7. Interacts with PHC2. Phosphorylated. Homodimer formation is regulated by phosphorylation with only unphosphorylated proteins forming homodimers. Detected in all tissues examined with high expression found in placenta lung and kidney and low expression, in liver, pancreas and skeletal muscle.

The protein resides in the nucleus. Its function is as follows. Transcriptional repressor. Binds specifically to the DNA sequence 5'-GACTNGACT-3'. Has tumor suppressor activity. May play a role in control of cell proliferation and/or neural cell development. Regulates proliferation of early T progenitor cells by maintaining expression of HES1. Also plays a role in antero-posterior specification of the axial skeleton and negative regulation of the self-renewal activity of hematopoietic stem cells. Component of a Polycomb group (PcG) multiprotein PRC1-like complex, a complex class required to maintain the transcriptionally repressive state of many genes, including Hox genes, throughout development. PcG PRC1 complex acts via chromatin remodeling and modification of histones; it mediates monoubiquitination of histone H2A 'Lys-119', rendering chromatin heritably changed in its expressibility. Within the PRC1-like complex, regulates RNF2 ubiquitin ligase activity. The polypeptide is Polycomb group RING finger protein 2 (PCGF2) (Homo sapiens (Human)).